The primary structure comprises 718 residues: Ribosomal RNA large subunit methyltransferase K/L (718 aa).

The THUMP domain maps to 44-155 (DAYKVCIYSY…KQFVNVFLCL (112 aa)).

The protein belongs to the methyltransferase superfamily. RlmKL family.

The protein localises to the cytoplasm. The enzyme catalyses guanosine(2445) in 23S rRNA + S-adenosyl-L-methionine = N(2)-methylguanosine(2445) in 23S rRNA + S-adenosyl-L-homocysteine + H(+). It catalyses the reaction guanosine(2069) in 23S rRNA + S-adenosyl-L-methionine = N(2)-methylguanosine(2069) in 23S rRNA + S-adenosyl-L-homocysteine + H(+). Specifically methylates the guanine in position 2445 (m2G2445) and the guanine in position 2069 (m7G2069) of 23S rRNA. This chain is Ribosomal RNA large subunit methyltransferase K/L, found in Francisella tularensis subsp. novicida (strain U112).